A 151-amino-acid polypeptide reads, in one-letter code: Probable transport accessory protein MmpS1 (151 aa).

2 helical membrane-spanning segments follow: residues 8–28 (FWIP…VSRL) and 81–101 (VVNA…AVVA).

The protein belongs to the MmpS family.

The protein localises to the cell membrane. This chain is Probable transport accessory protein MmpS1 (mmpS1), found in Mycobacterium tuberculosis (strain CDC 1551 / Oshkosh).